The chain runs to 493 residues: Bifunctional protein GlmU (493 aa).

Residues 1–246 (MTGELDVDGE…SWLVAGINDR (246 aa)) are pyrophosphorylase. UDP-N-acetyl-alpha-D-glucosamine contacts are provided by residues 21–24 (LAAG), K35, Q88, 93–94 (GT), 117–119 (SGD), G156, E171, N186, and N244. Mg(2+) is bound at residue D119. Position 244 (N244) interacts with Mg(2+). The segment at 247–267 (VQLTAAATELNARIIRRWQLA) is linker. Positions 268–493 (GVTIHDPRTT…DGPADDASDA (226 aa)) are N-acetyltransferase. 2 residues coordinate UDP-N-acetyl-alpha-D-glucosamine: R349 and K367. H379 (proton acceptor) is an active-site residue. Positions 382 and 393 each coordinate UDP-N-acetyl-alpha-D-glucosamine. Acetyl-CoA-binding positions include A396, 402 to 403 (NY), S421, and A439. The interval 470–493 (RPGTPEARAAVEAADGPADDASDA) is disordered.

This sequence in the N-terminal section; belongs to the N-acetylglucosamine-1-phosphate uridyltransferase family. In the C-terminal section; belongs to the transferase hexapeptide repeat family. In terms of assembly, homotrimer. Mg(2+) is required as a cofactor.

Its subcellular location is the cytoplasm. The enzyme catalyses alpha-D-glucosamine 1-phosphate + acetyl-CoA = N-acetyl-alpha-D-glucosamine 1-phosphate + CoA + H(+). It carries out the reaction N-acetyl-alpha-D-glucosamine 1-phosphate + UTP + H(+) = UDP-N-acetyl-alpha-D-glucosamine + diphosphate. Its pathway is nucleotide-sugar biosynthesis; UDP-N-acetyl-alpha-D-glucosamine biosynthesis; N-acetyl-alpha-D-glucosamine 1-phosphate from alpha-D-glucosamine 6-phosphate (route II): step 2/2. It participates in nucleotide-sugar biosynthesis; UDP-N-acetyl-alpha-D-glucosamine biosynthesis; UDP-N-acetyl-alpha-D-glucosamine from N-acetyl-alpha-D-glucosamine 1-phosphate: step 1/1. It functions in the pathway bacterial outer membrane biogenesis; LPS lipid A biosynthesis. In terms of biological role, catalyzes the last two sequential reactions in the de novo biosynthetic pathway for UDP-N-acetylglucosamine (UDP-GlcNAc). The C-terminal domain catalyzes the transfer of acetyl group from acetyl coenzyme A to glucosamine-1-phosphate (GlcN-1-P) to produce N-acetylglucosamine-1-phosphate (GlcNAc-1-P), which is converted into UDP-GlcNAc by the transfer of uridine 5-monophosphate (from uridine 5-triphosphate), a reaction catalyzed by the N-terminal domain. The chain is Bifunctional protein GlmU from Clavibacter sepedonicus (Clavibacter michiganensis subsp. sepedonicus).